A 130-amino-acid chain; its full sequence is Sulfurtransferase TusD (130 aa).

Cysteine 78 functions as the Cysteine persulfide intermediate in the catalytic mechanism.

The protein belongs to the DsrE/TusD family. Heterohexamer, formed by a dimer of trimers. The hexameric TusBCD complex contains 2 copies each of TusB, TusC and TusD. The TusBCD complex interacts with TusE.

The protein resides in the cytoplasm. In terms of biological role, part of a sulfur-relay system required for 2-thiolation of 5-methylaminomethyl-2-thiouridine (mnm(5)s(2)U) at tRNA wobble positions. Accepts sulfur from TusA and transfers it in turn to TusE. This is Sulfurtransferase TusD from Buchnera aphidicola subsp. Baizongia pistaciae (strain Bp).